A 218-amino-acid chain; its full sequence is Probable nicotinate-nucleotide adenylyltransferase (218 aa).

It belongs to the NadD family.

It catalyses the reaction nicotinate beta-D-ribonucleotide + ATP + H(+) = deamido-NAD(+) + diphosphate. The protein operates within cofactor biosynthesis; NAD(+) biosynthesis; deamido-NAD(+) from nicotinate D-ribonucleotide: step 1/1. Its function is as follows. Catalyzes the reversible adenylation of nicotinate mononucleotide (NaMN) to nicotinic acid adenine dinucleotide (NaAD). This Sodalis glossinidius (strain morsitans) protein is Probable nicotinate-nucleotide adenylyltransferase.